Consider the following 190-residue polypeptide: FMRFamide-related peptides (190 aa).

An N-terminal signal peptide occupies residues 1–21 (MSCSRTVALLAALWLVVGATS). Positions 22–33 (SPVRRSPDLEAR) are excised as a propeptide. F45 bears the Phenylalanine amide mark. Positions 69–104 (GNSFLRFGRSQPLTLSTDDLVSLLRAYEEDYDTPMT) are excised as a propeptide. Position 113 is a phenylalanine amide (F113). The propeptide occupies 116–150 (DPNFIRLGRSADDDKSAFEQNSELVVSGYPQRKSR). Residue L158 is modified to Leucine amide. Positions 160 to 190 (RDSEEVNENEFEETEESRRKRSADSCHDCQS) are excised as a propeptide. The tract at residues 161–190 (DSEEVNENEFEETEESRRKRSADSCHDCQS) is disordered. The segment covering 164–174 (EVNENEFEETE) has biased composition (acidic residues). The segment covering 175 to 190 (ESRRKRSADSCHDCQS) has biased composition (basic and acidic residues).

Belongs to the FARP (FMRFamide related peptide) family. RFamide 1: Expressed in corpora cardiaca (CC), corpora allata (CA), antennal lobe (AL) and gnathal ganglion (GNG) (at protein level). Expression in AL detected in most animals, in CC, CA and in GNG in some animals (at protein level). RFamide precursor-related peptide 2: Expressed in corpora cardiaca (CC), corpora allata (CA), antennal lobe (AL) and gnathal ganglion (GNG) (at protein level). Expression in AL detected in some animals, expression in CC, CA and GNG in few animals (at protein level). RFamide 3: Expressed in corpora cardiaca (CC), corpora allata (CA), antennal lobe (AL) and gnathal ganglion (GNG) (at protein level). Expression in AL detected in all animals, in CC, CA and GNG in most animals (at protein level). RFamide 5: Expressed in corpora cardiaca (CC), corpora allata (CA), antennal lobe (AL) and gnathal ganglion (GNG) (at protein level). Expression in AL detected in all animals, in CC, CA and in GNG in some animals (at protein level).

The protein resides in the secreted. Functionally, in insects, FMRFamide and related peptides have modulatory actions at skeletal neuromuscular junctions, and peptides that are immunologically related to FMRFamide are released into the circulation from neurohemal organs. This Agrotis ipsilon (Black cutworm moth) protein is FMRFamide-related peptides.